A 191-amino-acid chain; its full sequence is Putative acetyltransferase DDB_G0280825 (191 aa).

This sequence belongs to the transferase hexapeptide repeat family.

The protein is Putative acetyltransferase DDB_G0280825 of Dictyostelium discoideum (Social amoeba).